Here is a 521-residue protein sequence, read N- to C-terminus: Bifunctional dihydrofolate reductase-thymidylate synthase (521 aa).

Residues 22 to 232 (AFSLVVAVDE…TKYYFEKLIP (211 aa)) enclose the DHFR domain. Residue Val-26 participates in substrate binding. NADP(+) is bound by residues Ala-28 and 34–40 (GIGDGRS). A substrate-binding site is contributed by Asp-48. NADP(+) contacts are provided by residues 78–80 (RKT) and 99–102 (LSST). Ile-154, Tyr-160, and Thr-178 together coordinate substrate. 155 to 162 (GGGSVYAE) serves as a coordination point for NADP(+). The segment at 237–521 (EEQYLSLVDR…YPPISMKMAV (285 aa)) is thymidylate synthase. Arg-257 is a binding site for dUMP. Residue Cys-403 is part of the active site. Residues His-404, 422–426 (QRSCD), Asn-434, and 464–466 (HVY) each bind dUMP.

The protein in the N-terminal section; belongs to the dihydrofolate reductase family. It in the C-terminal section; belongs to the thymidylate synthase family. Homodimer.

It catalyses the reaction (6S)-5,6,7,8-tetrahydrofolate + NADP(+) = 7,8-dihydrofolate + NADPH + H(+). It carries out the reaction dUMP + (6R)-5,10-methylene-5,6,7,8-tetrahydrofolate = 7,8-dihydrofolate + dTMP. It functions in the pathway cofactor biosynthesis; tetrahydrofolate biosynthesis; 5,6,7,8-tetrahydrofolate from 7,8-dihydrofolate: step 1/1. Functionally, bifunctional enzyme. Involved in de novo dTMP biosynthesis. Key enzyme in folate metabolism. Catalyzes an essential reaction for de novo glycine and purine synthesis, DNA precursor synthesis, and for the conversion of dUMP to dTMP. This is Bifunctional dihydrofolate reductase-thymidylate synthase from Trypanosoma cruzi.